Consider the following 690-residue polypeptide: MNSNFNQHFERIKELRALLNKANYSYYVLDSPEIDDAVYDQLYRELIEIENIHPSLITDDSPSQRLGGVPSKGFKNVEHNIPLLSLDNAFNLNELESWYGRISKLISSENKNIKKVDDLELICELKIDGNAISLRYENGILTRAATRGDGKTGEDITTNIRTISTIPLRLLLENPPSWVEIRGEAFMPNNIFNKLNIERKNTDQPLFANPRNSCAGTLRQLDPKIVASRKLDFFAYSLYFPENWEPTDNNFKKPISQSESLEFLKNIGFKVNTTYETTKTLNEANKYYKYWEVKKDFLAYATDGIVVKIDKFDIQNLLGATNKAPRWAIAVKYPAEEKATKLRKIIFQVGRSGAVTPVAEFESIELAGTSVNRATLHNAKRLASLDLHYEDTIIVRKAGEIIPEVIRVIKEFRKVDAKLVQLPQNCPECNSKLILESNEAITKCINYGCEAKLKGLLRHWVSKGSMNIDGLGEKIINQLVNEGYVKSIADLYKLEIDSLLELERFGEKSANNLLIEINESKNKNWHKQLYGLGIPHIGEANAKSLSNNFNSIEELNAIAKESPEKISNIYGFGNEMKDSIVKWFDDSNNQTLIKELKAIGFSLKESLDSNYNSNQSNVFDGKSFVLTGTLDSLTRDEAKELIESAGGKVSSSISKKTDFLVSGEKAGSKLNKAQELGVKIINENELKLLL.

NAD(+) contacts are provided by residues Asp36–Asp40, Ser85–Leu86, and Glu124. The N6-AMP-lysine intermediate role is filled by Lys126. Positions 147, 184, 308, and 332 each coordinate NAD(+). Zn(2+) is bound by residues Cys426, Cys429, Cys444, and Cys449. The region spanning Asn614 to Leu690 is the BRCT domain.

Belongs to the NAD-dependent DNA ligase family. LigA subfamily. It depends on Mg(2+) as a cofactor. Mn(2+) is required as a cofactor.

The catalysed reaction is NAD(+) + (deoxyribonucleotide)n-3'-hydroxyl + 5'-phospho-(deoxyribonucleotide)m = (deoxyribonucleotide)n+m + AMP + beta-nicotinamide D-nucleotide.. Its function is as follows. DNA ligase that catalyzes the formation of phosphodiester linkages between 5'-phosphoryl and 3'-hydroxyl groups in double-stranded DNA using NAD as a coenzyme and as the energy source for the reaction. It is essential for DNA replication and repair of damaged DNA. The chain is DNA ligase from Prochlorococcus marinus (strain NATL1A).